Here is a 108-residue protein sequence, read N- to C-terminus: uncharacterized protein (108 aa).

Residues 56–108 (ELPSRGCLPAPRPESGQGRLSTGISQNGGRSSAQPCPRCIAGESGHFSHTKNH) form a disordered region. Residues 73-89 (GRLSTGISQNGGRSSAQ) show a composition bias toward polar residues.

This is an uncharacterized protein from Homo sapiens (Human).